The primary structure comprises 335 residues: Acetyl-coenzyme A carboxylase carboxyl transferase subunit alpha (335 aa).

Residues 40–294 enclose the CoA carboxyltransferase C-terminal domain; that stretch reads QLETLATRRR…KASIERHLSE (255 aa).

Belongs to the AccA family. As to quaternary structure, acetyl-CoA carboxylase is a heterohexamer composed of biotin carboxyl carrier protein (AccB), biotin carboxylase (AccC) and two subunits each of ACCase subunit alpha (AccA) and ACCase subunit beta (AccD).

Its subcellular location is the cytoplasm. It carries out the reaction N(6)-carboxybiotinyl-L-lysyl-[protein] + acetyl-CoA = N(6)-biotinyl-L-lysyl-[protein] + malonyl-CoA. The protein operates within lipid metabolism; malonyl-CoA biosynthesis; malonyl-CoA from acetyl-CoA: step 1/1. Functionally, component of the acetyl coenzyme A carboxylase (ACC) complex. First, biotin carboxylase catalyzes the carboxylation of biotin on its carrier protein (BCCP) and then the CO(2) group is transferred by the carboxyltransferase to acetyl-CoA to form malonyl-CoA. The protein is Acetyl-coenzyme A carboxylase carboxyl transferase subunit alpha of Prochlorococcus marinus (strain MIT 9515).